Here is a 432-residue protein sequence, read N- to C-terminus: Glutamate-1-semialdehyde 2,1-aminomutase (432 aa).

K272 is modified (N6-(pyridoxal phosphate)lysine).

Belongs to the class-III pyridoxal-phosphate-dependent aminotransferase family. HemL subfamily. In terms of assembly, homodimer. Pyridoxal 5'-phosphate is required as a cofactor.

Its subcellular location is the cytoplasm. The catalysed reaction is (S)-4-amino-5-oxopentanoate = 5-aminolevulinate. Its pathway is porphyrin-containing compound metabolism; protoporphyrin-IX biosynthesis; 5-aminolevulinate from L-glutamyl-tRNA(Glu): step 2/2. It participates in porphyrin-containing compound metabolism; chlorophyll biosynthesis. In Nostoc punctiforme (strain ATCC 29133 / PCC 73102), this protein is Glutamate-1-semialdehyde 2,1-aminomutase.